Reading from the N-terminus, the 466-residue chain is 55 kDa erythrocyte membrane protein (466 aa).

Position 2 is an N-acetylthreonine (T2). Phosphoserine occurs at positions 13 and 19. T49 carries the post-translational modification Phosphothreonine. 3 positions are modified to phosphoserine: S52, S57, and S110. Residues 71–152 (LIQFEKVTEE…MISLKVIPNQ (82 aa)) form the PDZ domain. An SH3 domain is found at 158-228 (ALQMFMRAQF…PSPELQEWRV (71 aa)). S243 is modified (phosphoserine). Positions 268–466 (VVSYEEVVRL…PQWVPVSWVY (199 aa)) are interaction with PALS1. Residues 282-451 (RKTLVLIGAS…TLKKLQEAFD (170 aa)) form the Guanylate kinase-like domain.

Belongs to the MAGUK family. In terms of assembly, heterodimer with PALS1. Interacts with DLG5 and NF2. Interacts (via guanylate kinase-like domain) with WHRN (via third PDZ domain). Palmitoylated. In terms of tissue distribution, ubiquitous.

It localises to the cell membrane. It is found in the cell projection. The protein localises to the stereocilium. Essential regulator of neutrophil polarity. Regulates neutrophil polarization by regulating AKT1 phosphorylation through a mechanism that is independent of PIK3CG activity. This is 55 kDa erythrocyte membrane protein (MPP1) from Homo sapiens (Human).